The sequence spans 274 residues: Phosphate import ATP-binding protein PstB (274 aa).

Over residues 1 to 11 (MSEISIATSVP) the composition is skewed to polar residues. The interval 1 to 21 (MSEISIATSVPSGPGPLIGNQ) is disordered. The 242-residue stretch at 28–269 (VIVRDLNFYY…PNDRRTQDYI (242 aa)) folds into the ABC transporter domain. 60 to 67 (GPSGCGKS) serves as a coordination point for ATP.

It belongs to the ABC transporter superfamily. Phosphate importer (TC 3.A.1.7) family. As to quaternary structure, the complex is composed of two ATP-binding proteins (PstB), two transmembrane proteins (PstC and PstA) and a solute-binding protein (PstS).

The protein localises to the cell inner membrane. The catalysed reaction is phosphate(out) + ATP + H2O = ADP + 2 phosphate(in) + H(+). Its function is as follows. Part of the ABC transporter complex PstSACB involved in phosphate import. Responsible for energy coupling to the transport system. The protein is Phosphate import ATP-binding protein PstB of Rhodopseudomonas palustris (strain BisB5).